The following is a 419-amino-acid chain: Serine--tRNA ligase (419 aa).

L-serine is bound at residue T226 to E228. ATP contacts are provided by residues R257 to E259 and V273. Residue E280 coordinates L-serine. E344–S347 lines the ATP pocket. Position 379 (T379) interacts with L-serine.

The protein belongs to the class-II aminoacyl-tRNA synthetase family. Type-1 seryl-tRNA synthetase subfamily. As to quaternary structure, homodimer. The tRNA molecule binds across the dimer.

The protein localises to the cytoplasm. The catalysed reaction is tRNA(Ser) + L-serine + ATP = L-seryl-tRNA(Ser) + AMP + diphosphate + H(+). It catalyses the reaction tRNA(Sec) + L-serine + ATP = L-seryl-tRNA(Sec) + AMP + diphosphate + H(+). It participates in aminoacyl-tRNA biosynthesis; selenocysteinyl-tRNA(Sec) biosynthesis; L-seryl-tRNA(Sec) from L-serine and tRNA(Sec): step 1/1. In terms of biological role, catalyzes the attachment of serine to tRNA(Ser). Is also able to aminoacylate tRNA(Sec) with serine, to form the misacylated tRNA L-seryl-tRNA(Sec), which will be further converted into selenocysteinyl-tRNA(Sec). This is Serine--tRNA ligase from Corynebacterium efficiens (strain DSM 44549 / YS-314 / AJ 12310 / JCM 11189 / NBRC 100395).